We begin with the raw amino-acid sequence, 246 residues long: Cell division protein ZapD (246 aa).

Belongs to the ZapD family. Interacts with FtsZ.

Its subcellular location is the cytoplasm. Functionally, cell division factor that enhances FtsZ-ring assembly. Directly interacts with FtsZ and promotes bundling of FtsZ protofilaments, with a reduction in FtsZ GTPase activity. The sequence is that of Cell division protein ZapD from Vibrio parahaemolyticus serotype O3:K6 (strain RIMD 2210633).